Here is a 505-residue protein sequence, read N- to C-terminus: uncharacterized protein (505 aa).

Residues 193 to 440 enclose the Radical SAM core domain; that stretch reads CTNKKCNLCE…LEIKKKYIGR (248 aa). Cys-208, Cys-216, and Cys-219 together coordinate [4Fe-4S] cluster. Positions 435–499 constitute a TRAM domain; sequence KKYIGRVLEV…EKYLEGRILK (65 aa).

The cofactor is [4Fe-4S] cluster.

This is an uncharacterized protein from Methanocaldococcus jannaschii (strain ATCC 43067 / DSM 2661 / JAL-1 / JCM 10045 / NBRC 100440) (Methanococcus jannaschii).